Consider the following 115-residue polypeptide: Large ribosomal subunit protein bL19 (115 aa).

This sequence belongs to the bacterial ribosomal protein bL19 family.

Functionally, this protein is located at the 30S-50S ribosomal subunit interface and may play a role in the structure and function of the aminoacyl-tRNA binding site. The protein is Large ribosomal subunit protein bL19 of Buchnera aphidicola subsp. Schizaphis graminum (strain Sg).